Reading from the N-terminus, the 476-residue chain is Bifunctional protein HldE (476 aa).

Residues 1 to 319 (MKVSLPAFEK…EALALHHGES (319 aa)) are ribokinase. Position 195–198 (195–198 (NMSE)) interacts with ATP. The active site involves Asp264. Residues 345 to 476 (MTNGCFDILH…AIIQNIMANQ (132 aa)) are cytidylyltransferase.

In the N-terminal section; belongs to the carbohydrate kinase PfkB family. This sequence in the C-terminal section; belongs to the cytidylyltransferase family. Homodimer.

It catalyses the reaction D-glycero-beta-D-manno-heptose 7-phosphate + ATP = D-glycero-beta-D-manno-heptose 1,7-bisphosphate + ADP + H(+). It carries out the reaction D-glycero-beta-D-manno-heptose 1-phosphate + ATP + H(+) = ADP-D-glycero-beta-D-manno-heptose + diphosphate. Its pathway is nucleotide-sugar biosynthesis; ADP-L-glycero-beta-D-manno-heptose biosynthesis; ADP-L-glycero-beta-D-manno-heptose from D-glycero-beta-D-manno-heptose 7-phosphate: step 1/4. It participates in nucleotide-sugar biosynthesis; ADP-L-glycero-beta-D-manno-heptose biosynthesis; ADP-L-glycero-beta-D-manno-heptose from D-glycero-beta-D-manno-heptose 7-phosphate: step 3/4. Its function is as follows. Catalyzes the phosphorylation of D-glycero-D-manno-heptose 7-phosphate at the C-1 position to selectively form D-glycero-beta-D-manno-heptose-1,7-bisphosphate. In terms of biological role, catalyzes the ADP transfer from ATP to D-glycero-beta-D-manno-heptose 1-phosphate, yielding ADP-D-glycero-beta-D-manno-heptose. The chain is Bifunctional protein HldE from Shewanella sp. (strain W3-18-1).